The chain runs to 608 residues: Protein trichome birefringence (608 aa).

The chain crosses the membrane as a helical; Signal-anchor for type II membrane protein span at residues Thr-38–Pro-58. 2 stretches are compositionally biased toward polar residues: residues Ser-101 to Ala-137 and Ala-145 to Ala-203. Residues Ser-101–Asp-236 form a disordered region. Residues Thr-215–Thr-227 are compositionally biased toward low complexity. Residues Gly-328–Ser-330 carry the GDS motif motif. The DCXHWCLPGXXDXWN motif signature appears at Asp-573–Asn-587.

It belongs to the PC-esterase family. TBL subfamily. In terms of tissue distribution, expressed in leaf vasculature, growing part of the root, expanding inflorescence stems and trichomes.

Its subcellular location is the membrane. In terms of biological role, required during cellulose deposition. May act as a bridging protein that binds pectin and other cell wall polysaccharides. Probably involved in maintaining esterification of pectins. May be involved in the specific O-acetylation of cell wall polymers. The chain is Protein trichome birefringence (TBR) from Arabidopsis thaliana (Mouse-ear cress).